Here is a 108-residue protein sequence, read N- to C-terminus: BH3-like motif-containing cell death inducer (108 aa).

The BH3-like motif lies at leucine 5 to isoleucine 12.

Ubiquitously expressed.

It is found in the cytoplasm. It localises to the mitochondrion. In terms of biological role, functions as a proapoptotic molecule through the caspase-dependent mitochondrial pathway of cell death. The chain is BH3-like motif-containing cell death inducer (BLID) from Homo sapiens (Human).